Reading from the N-terminus, the 790-residue chain is Serine/threonine-protein kinase DCLK3 (790 aa).

Residues 1 to 37 (MPAAPVLRPPPPPATPAPPAPSRPAPPIPGHRGPCDH) are disordered. Pro residues predominate over residues 7–29 (LRPPPPPATPAPPAPSRPAPPIP). Positions 97 to 183 (RVVTVVKLGG…KEPLTLKSIQ (87 aa)) constitute a Doublecortin domain. Residues 201–218 (HSRVPSPRLRSRLPSKLL) are compositionally biased toward low complexity. Disordered regions lie at residues 201–290 (HSRV…SGEK) and 315–506 (LQLG…KGII). Basic and acidic residues-rich tracts occupy residues 332-345 (DLGR…EKLV), 352-400 (RPSE…ESQD), 425-434 (IDMRREDRHT), and 457-496 (TRGE…ERPS). The Protein kinase domain maps to 514-771 (YDIGGVIGDG…AEQVLQHPWI (258 aa)). Residues 520-528 (IGDGNFATV) and Lys-543 each bind ATP. Asp-635 acts as the Proton acceptor in catalysis.

The protein belongs to the protein kinase superfamily. CAMK Ser/Thr protein kinase family. CaMK subfamily. In terms of tissue distribution, highly expressed in brain and to a lower extent in liver and kidney.

The protein resides in the cytoplasm. The protein localises to the nucleus. It carries out the reaction L-seryl-[protein] + ATP = O-phospho-L-seryl-[protein] + ADP + H(+). It catalyses the reaction L-threonyl-[protein] + ATP = O-phospho-L-threonyl-[protein] + ADP + H(+). In Mus musculus (Mouse), this protein is Serine/threonine-protein kinase DCLK3 (Dclk3).